The sequence spans 1476 residues: Membrane-associated guanylate kinase, WW and PDZ domain-containing protein 3 (1476 aa).

Residues 18–108 enclose the PDZ 1 domain; that stretch reads CAVSWAGPPG…PIRLKTVKPG (91 aa). The interval 18 to 108 is interaction with ADRB1 and TGFA; sequence CAVSWAGPPG…PIRLKTVKPG (91 aa). The Guanylate kinase-like domain occupies 116 to 290; it reads RHYLSLQFQK…SSMDFRNYMM (175 aa). 123 to 130 lines the ATP pocket; the sequence is FQKGSIDH. The segment at 184–266 is disordered; it reads TYDGNFYGTP…ETREMHSETS (83 aa). Pro residues predominate over residues 193–204; that stretch reads PKPPAEPSPFQP. S236 bears the Phosphoserine mark. Residues 238-247 are compositionally biased toward acidic residues; that stretch reads LPEEEEDEDK. 2 consecutive WW domains span residues 296-329 and 342-375; these read EPLP…DPRL and GELP…NPVE. The PDZ 2 domain occupies 413–495; it reads RASLKKSTMG…NQYVNLTLCR (83 aa). Residues 413-495 are interaction with PTEN; that stretch reads RASLKKSTMG…NQYVNLTLCR (83 aa). Residues 551-575 are disordered; that stretch reads LASDRLNGPSESSEQRASLASSGSS. Residues 559 to 575 are compositionally biased toward polar residues; it reads PSESSEQRASLASSGSS. The 77-residue stretch at 581–657 folds into the PDZ 3 domain; that stretch reads TIPLIKGPKG…GADVPLLILR (77 aa). Position 598 is a phosphoserine (S598). The interval 664-691 is disordered; it reads TKTAKTKTDTKENSGSLETINEPIPQPM. S702 is subject to Phosphoserine. One can recognise a PDZ 4 domain in the interval 729–811; the sequence is DVFLRKQESG…NGHVLLTVRR (83 aa). The tract at residues 729 to 811 is interaction with ADGRB1; that stretch reads DVFLRKQESG…NGHVLLTVRR (83 aa). Residues 818–844 form a disordered region; that stretch reads KQPEDESHQAFSQNGSPRLNRAELPTR. Residues S833 and S916 each carry the phosphoserine modification. One can recognise a PDZ 5 domain in the interval 852–939; it reads DVTLQRKENE…TVTLTVVAEE (88 aa). The interaction with LPAR2 and GRIN2B stretch occupies residues 852–939; sequence DVTLQRKENE…TVTLTVVAEE (88 aa). The segment at 939–966 is disordered; the sequence is EEHHGPPSGTNSARQSPALQHRPMGQAQ. The span at 946–956 shows a compositional bias: polar residues; the sequence is SGTNSARQSPA. Residues 1022–1104 form the PDZ 6 domain; sequence PVELERGPRG…KVLLLLRPGT (83 aa). 2 disordered regions span residues 1109-1151 and 1168-1476; these read DHGD…ATED and TVQE…DKQL. The segment covering 1114–1123 has biased composition (polar residues); the sequence is DTNSPSSSNV. 2 stretches are compositionally biased toward basic and acidic residues: residues 1193 to 1211 and 1230 to 1265; these read SKKD…RLKG and RHSE…ESKG. Residues 1285–1304 show a composition bias toward polar residues; it reads SSSPKKQQKIGGNSLSNTEG. Basic and acidic residues-rich tracts occupy residues 1317–1340 and 1350–1361; these read HPRD…KDLK and KSPEKKSSKVDE. Residue S1321 is modified to Phosphoserine. Over residues 1363 to 1373 the composition is skewed to polar residues; it reads SLPSKKTSSTA. The span at 1419-1437 shows a compositional bias: basic and acidic residues; it reads ADDHKGRESEVTDRCRERA.

The protein belongs to the MAGUK family. As to quaternary structure, interacts with ADRB1, ADGRB1, LPAR2/EDG4, GRIN2B, PTEN, and PTPRB. Interacts with unidentified tyrosine phosphorylated proteins. Interacts with FZD4, FZD7, TGFA and VANGL2. Interacts with DLL1. Interacts with PRRG4 (via cytoplasmic domain). Widely expressed. Colocalizes with TGFA in neurons in the cortex and dentate gyrus, as well as in ependymal cells and some astrocytes (at protein level). Present in lens epithelium.

Its subcellular location is the cell membrane. The protein resides in the cell junction. It localises to the tight junction. It is found in the nucleus. In terms of biological role, acts as a scaffolding protein at cell-cell junctions, thereby regulating various cellular and signaling processes. Cooperates with PTEN to modulate the kinase activity of AKT1. Its interaction with PTPRB and tyrosine phosphorylated proteins suggests that it may link receptor tyrosine phosphatase with its substrates at the plasma membrane. In polarized epithelial cells, involved in efficient trafficking of TGFA to the cell surface. Regulates the ability of LPAR2 to activate ERK and RhoA pathways. Regulates the JNK signaling cascade via its interaction with FZD4 and VANGL2. The chain is Membrane-associated guanylate kinase, WW and PDZ domain-containing protein 3 (Magi3) from Mus musculus (Mouse).